A 184-amino-acid chain; its full sequence is Shikimate kinase (184 aa).

17–22 contacts ATP; the sequence is GAGKTT. A Mg(2+)-binding site is contributed by Thr21. The substrate site is built by Asp39, Arg63, and Gly85. Arg123 contacts ATP. Residue Arg142 participates in substrate binding.

Belongs to the shikimate kinase family. Monomer. It depends on Mg(2+) as a cofactor.

The protein resides in the cytoplasm. The catalysed reaction is shikimate + ATP = 3-phosphoshikimate + ADP + H(+). It functions in the pathway metabolic intermediate biosynthesis; chorismate biosynthesis; chorismate from D-erythrose 4-phosphate and phosphoenolpyruvate: step 5/7. Functionally, catalyzes the specific phosphorylation of the 3-hydroxyl group of shikimic acid using ATP as a cosubstrate. In Burkholderia lata (strain ATCC 17760 / DSM 23089 / LMG 22485 / NCIMB 9086 / R18194 / 383), this protein is Shikimate kinase.